A 506-amino-acid polypeptide reads, in one-letter code: Protein CYCLOPS (506 aa).

Disordered regions lie at residues 193–223 and 385–434; these read TVNS…LDNP and KENL…RSST. Residues 202-219 show a composition bias toward low complexity; the sequence is TPSQTPTFVSPSSSSTSP. Positions 385–394 are enriched in basic and acidic residues; sequence KENLKDDRKK. The Nuclear localization signal signature appears at 415-418; it reads KKRR. Over residues 422 to 432 the composition is skewed to basic and acidic residues; the sequence is SRKMAEAKERS. Residues 441-506 adopt a coiled-coil conformation; that stretch reads IQVVLKRCET…IERIVSDTNT (66 aa).

Belongs to the CYCLOPS family. Highly epressed in roots. Expressed at very low levels in leaves, stems and panicles.

Its subcellular location is the nucleus. Functionally, involved in arbuscular mycorrhizal (AM) symbiosis. Required for fungal infection in roots and arbuscule development during AM symbiosis. The sequence is that of Protein CYCLOPS from Oryza sativa subsp. japonica (Rice).